The chain runs to 187 residues: Ribosome-recycling factor (187 aa).

This sequence belongs to the RRF family.

It localises to the cytoplasm. In terms of biological role, responsible for the release of ribosomes from messenger RNA at the termination of protein biosynthesis. May increase the efficiency of translation by recycling ribosomes from one round of translation to another. This Bradyrhizobium sp. (strain BTAi1 / ATCC BAA-1182) protein is Ribosome-recycling factor.